A 499-amino-acid polypeptide reads, in one-letter code: Protein flp (499 aa).

4 helical membrane-spanning segments follow: residues leucine 6–threonine 26, phenylalanine 389–tyrosine 409, leucine 433–leucine 453, and leucine 471–leucine 491.

The protein localises to the cell membrane. Its function is as follows. Its precise function is unknown. Has no penicillin-binding activity and is not involved in methicillin resistance. In Staphylococcus aureus (strain MRSA252), this protein is Protein flp (flp).